A 901-amino-acid polypeptide reads, in one-letter code: MLIKLLTKVFGSRNDRTLRRMRKVVNIINAMEPEMEKLSDEELKGKTAEFRARLEKGEVLENLIPEAFAVVREASKRVFGMRHFDVQLLGGMVLNERCIAEMRTGEGKTLTATLPAYLNALTGKGVHVVTVNDYLAQRDAENNRPLFEFLGLTVGINLPGMPAPAKREAYAADITYGTNNEYGFDYLRDNMAFSPEERVQRKLHYALVDEVDSILIDEARTPLIISGPAEDSSEMYKRVNKIIPHLIRQEKEDSETFQGEGHFSVDEKSRQVNLTERGLVLIEELLVKEGIMDEGESLYSPANIMLMHHVTAALRAHALFTRDVDYIVKDGEVIIVDEHTGRTMQGRRWSDGLHQAVEAKEGVQIQNENQTLASITFQNYFRLYEKLAGMTGTADTEAFEFSSIYKLDTVVVPTNRPMIRKDLPDLVYMTEAEKIQAIIEDIKERTAKGQPVLVGTISIEKSELVSNELTKAGIKHNVLNAKFHANEAAIVAQAGYPAAVTIATNMAGRGTDIVLGGSWQAEVAALENPTAEQIEKIKADWQVRHDAVLEAGGLHIIGTERHESRRIDNQLRGRSGRQGDAGSSRFYLSMEDALMRIFASDRVSGMMRKLGMKPGEAIEHPWVTKAIANAQRKVESRNFDIRKQLLEYDDVANDQRRAIYSQRNELLDVSDVSETINSIREDVFKATIDAYIPPQSLEEMWDIPGLQERLKNDFDLDLPIAEWLDKEPELHEETLRERILAQSIEVYQRKEEVVGAEMMRHFEKGVMLQTLDSLWKEHLAAMDYLRQGIHLRGYAQKDPKQEYKRESFSMFAAMLESLKYEVISTLSKVQVRMPEEVEELEQQRRMEAERLAQMQQLSHQDDDSAAAAALAAQTGERKVGRNDPCPCGSGKKYKQCHGRLQ.

Residues Gln-87, 105-109 (GEGKT), and Asp-512 each bind ATP. Residues 859 to 901 (HQDDDSAAAAALAAQTGERKVGRNDPCPCGSGKKYKQCHGRLQ) form a disordered region. Zn(2+) is bound by residues Cys-885, Cys-887, Cys-896, and His-897. The segment covering 891–901 (KKYKQCHGRLQ) has biased composition (basic residues).

Belongs to the SecA family. Monomer and homodimer. Part of the essential Sec protein translocation apparatus which comprises SecA, SecYEG and auxiliary proteins SecDF-YajC and YidC. Zn(2+) is required as a cofactor.

The protein localises to the cell inner membrane. It is found in the cytoplasm. The enzyme catalyses ATP + H2O + cellular proteinSide 1 = ADP + phosphate + cellular proteinSide 2.. Its function is as follows. Part of the Sec protein translocase complex. Interacts with the SecYEG preprotein conducting channel. Has a central role in coupling the hydrolysis of ATP to the transfer of proteins into and across the cell membrane, serving both as a receptor for the preprotein-SecB complex and as an ATP-driven molecular motor driving the stepwise translocation of polypeptide chains across the membrane. This is Protein translocase subunit SecA from Escherichia coli O139:H28 (strain E24377A / ETEC).